The sequence spans 352 residues: Heat-inducible transcription repressor HrcA (352 aa).

It belongs to the HrcA family.

Its function is as follows. Negative regulator of class I heat shock genes (grpE-dnaK-dnaJ and groELS operons). Prevents heat-shock induction of these operons. The polypeptide is Heat-inducible transcription repressor HrcA (Lactobacillus gasseri (strain ATCC 33323 / DSM 20243 / BCRC 14619 / CIP 102991 / JCM 1131 / KCTC 3163 / NCIMB 11718 / NCTC 13722 / AM63)).